The following is a 58-amino-acid chain: UPF0391 membrane protein Plav_0056 (58 aa).

2 consecutive transmembrane segments (helical) span residues 4–24 (WAAV…GGLV) and 30–50 (IAQI…IFGV).

The protein belongs to the UPF0391 family.

The protein localises to the cell membrane. This Parvibaculum lavamentivorans (strain DS-1 / DSM 13023 / NCIMB 13966) protein is UPF0391 membrane protein Plav_0056.